Here is a 276-residue protein sequence, read N- to C-terminus: Phosphonates import ATP-binding protein PhnC (276 aa).

Positions 2 to 246 constitute an ABC transporter domain; sequence LEIHNLQKSY…VLTRIYGAED (245 aa). An ATP-binding site is contributed by 35–42; the sequence is GPSGAGKS.

Belongs to the ABC transporter superfamily. Phosphonates importer (TC 3.A.1.9.1) family. As to quaternary structure, the complex is composed of two ATP-binding proteins (PhnC), two transmembrane proteins (PhnE) and a solute-binding protein (PhnD).

It is found in the cell inner membrane. The enzyme catalyses phosphonate(out) + ATP + H2O = phosphonate(in) + ADP + phosphate + H(+). Part of the ABC transporter complex PhnCDE involved in phosphonates import. Responsible for energy coupling to the transport system. The sequence is that of Phosphonates import ATP-binding protein PhnC from Alcaligenes faecalis.